A 293-amino-acid chain; its full sequence is Proline iminopeptidase (293 aa).

The AB hydrolase-1 domain maps to 28–277 (PLVLLHGGPG…NCGHMSFVEK (250 aa)). The active-site Nucleophile is the S105. The active site involves D244. H271 acts as the Proton donor in catalysis.

The protein belongs to the peptidase S33 family.

Its subcellular location is the cell envelope. The catalysed reaction is Release of N-terminal proline from a peptide.. Its function is as follows. Releases the N-terminal proline from various substrates. The chain is Proline iminopeptidase from Lactobacillus crispatus (strain ST1).